The following is a 397-amino-acid chain: Enoyl-[acyl-carrier-protein] reductase [NADH] FabV (397 aa).

NAD(+) contacts are provided by residues 48-53, 74-75, 111-112, and 139-140; these read GASTGY, FE, DA, and LA. Tyrosine 225 serves as a coordination point for substrate. The Proton donor role is filled by tyrosine 235. NAD(+) is bound by residues lysine 244 and 273–275; that span reads VVT.

It belongs to the TER reductase family. Monomer.

The catalysed reaction is a 2,3-saturated acyl-[ACP] + NAD(+) = a (2E)-enoyl-[ACP] + NADH + H(+). Its pathway is lipid metabolism; fatty acid biosynthesis. Resistant to triclosan. Functionally, involved in the final reduction of the elongation cycle of fatty acid synthesis (FAS II). Catalyzes the NADH-dependent reduction of the carbon-carbon double bond in the enoyl moiety that is covalently linked to an acyl carrier protein (ACP). The sequence is that of Enoyl-[acyl-carrier-protein] reductase [NADH] FabV from Aeromonas salmonicida (strain A449).